Here is a 380-residue protein sequence, read N- to C-terminus: Chaperone protein DnaJ (380 aa).

The J domain occupies aspartate 5–glycine 70. The segment at glycine 140–threonine 218 adopts a CR-type zinc-finger fold. Cysteine 153, cysteine 156, cysteine 170, cysteine 173, cysteine 192, cysteine 195, cysteine 206, and cysteine 209 together coordinate Zn(2+). CXXCXGXG motif repeat units lie at residues cysteine 153–glycine 160, cysteine 170–glycine 177, cysteine 192–glycine 199, and cysteine 206–glycine 213.

It belongs to the DnaJ family. As to quaternary structure, homodimer. It depends on Zn(2+) as a cofactor.

It is found in the cytoplasm. Participates actively in the response to hyperosmotic and heat shock by preventing the aggregation of stress-denatured proteins and by disaggregating proteins, also in an autonomous, DnaK-independent fashion. Unfolded proteins bind initially to DnaJ; upon interaction with the DnaJ-bound protein, DnaK hydrolyzes its bound ATP, resulting in the formation of a stable complex. GrpE releases ADP from DnaK; ATP binding to DnaK triggers the release of the substrate protein, thus completing the reaction cycle. Several rounds of ATP-dependent interactions between DnaJ, DnaK and GrpE are required for fully efficient folding. Also involved, together with DnaK and GrpE, in the DNA replication of plasmids through activation of initiation proteins. This Paraburkholderia xenovorans (strain LB400) protein is Chaperone protein DnaJ.